Consider the following 148-residue polypeptide: FAD synthase (148 aa).

Residues Thr-9–Phe-10, His-14–His-17, Asn-92, and Tyr-119 contribute to the ATP site.

It belongs to the archaeal FAD synthase family. As to quaternary structure, homodimer. A divalent metal cation is required as a cofactor.

The catalysed reaction is FMN + ATP + H(+) = FAD + diphosphate. The protein operates within cofactor biosynthesis; FAD biosynthesis; FAD from FMN: step 1/1. Functionally, catalyzes the transfer of the AMP portion of ATP to flavin mononucleotide (FMN) to produce flavin adenine dinucleotide (FAD) coenzyme. In Methanolacinia petrolearia (strain DSM 11571 / OCM 486 / SEBR 4847) (Methanoplanus petrolearius), this protein is FAD synthase.